A 2206-amino-acid chain; its full sequence is Genome polyprotein (2206 aa).

Residue Gly-2 is the site of N-myristoyl glycine; by host attachment. Residues 2–1517 (GAQVSSQKVG…NINRAMTILQ (1516 aa)) lie on the Cytoplasmic side of the membrane. Amphipathic alpha-helix stretches follow at residues 579–599 (GVDD…LPKP) and 579–603 (GVDD…QSNL). Active-site for protease 2A activity residues include His-898 and Asp-916. 2 residues coordinate Zn(2+): Cys-933 and Cys-935. The active-site For protease 2A activity is Cys-987. The Zn(2+) site is built by Cys-993 and His-995. The segment at 1125-1197 (GDSWLKKFTE…HQSCPSQEHQ (73 aa)) is membrane-binding. An oligomerization region spans residues 1125-1263 (GDSWLKKFTE…SPGTGKSVAT (139 aa)). The RNA-binding stretch occupies residues 1146–1150 (SNKIS). Residues 1229-1385 (EHTINNYIQF…SEYSRDGKLN (157 aa)) form the SF3 helicase domain. 1253–1260 (GSPGTGKS) provides a ligand contact to ATP. The Zn(2+) site is built by Cys-1393, Cys-1396, Cys-1405, and Cys-1410. A C4-type zinc finger spans residues 1393 to 1410 (CKNCHQPANFKRCCPLVC). Residues 1437 to 1444 (EKNRRSNI) are RNA-binding. An oligomerization region spans residues 1448–1453 (MEALFQ). The stretch at 1518-1533 (AVTTFAAVAGVVYVMY) is an intramembrane region. At 1534–2206 (KLFAGHQGAY…TLYRRWLDSF (673 aa)) the chain is on the cytoplasmic side. Tyr-1543 carries the O-(5'-phospho-RNA)-tyrosine modification. A Peptidase C3 domain is found at 1563-1741 (GPGFDYAVAM…FAAALKRSYF (179 aa)). Catalysis depends on for protease 3C activity residues His-1602, Glu-1633, and Cys-1709. The RdRp catalytic domain occupies 1972-2087 (EKLFAFDYTG…SYPHEVDASL (116 aa)). Mg(2+) contacts are provided by Asp-1978 and Asp-2073.

This sequence belongs to the picornaviruses polyprotein family. As to quaternary structure, interacts with capsid protein VP1 and capsid protein VP3 to form heterotrimeric protomers. Interacts with capsid protein VP0, and capsid protein VP3 to form heterotrimeric protomers. Interacts with human PVR. Five protomers subsequently associate to form pentamers which serve as building blocks for the capsid. Interacts with capsid protein VP2, capsid protein VP3 and capsid protein VP4 following cleavage of capsid protein VP0. In terms of assembly, interacts with capsid protein VP1 and capsid protein VP3 in the mature capsid. As to quaternary structure, interacts with capsid protein VP0 and capsid protein VP1 to form heterotrimeric protomers. Five protomers subsequently associate to form pentamers which serve as building blocks for the capsid. Interacts with capsid protein VP4 in the mature capsid. Interacts with protein 2C; this interaction may be important for virion morphogenesis. Interacts with capsid protein VP1 and capsid protein VP3. In terms of assembly, homodimer. As to quaternary structure, homohexamer; forms a hexameric ring structure with 6-fold symmetry characteristic of AAA+ ATPases. Interacts (via N-terminus) with host RTN3 (via reticulon domain); this interaction is important for viral replication. Interacts with capsid protein VP3; this interaction may be important for virion morphogenesis. Interacts with protein 3CD. In terms of assembly, homodimer. Interacts with host GBF1. Interacts (via GOLD domain) with host ACBD3 (via GOLD domain); this interaction allows the formation of a viral protein 3A/ACBD3 heterotetramer with a 2:2 stoichiometry, which will stimulate the recruitment of host PI4KB in order to synthesize PI4P at the viral RNA replication sites. As to quaternary structure, interacts with RNA-directed RNA polymerase. Interacts with protein 3AB and with RNA-directed RNA polymerase. In terms of assembly, interacts with Viral protein genome-linked and with protein 3CD. The cofactor is Mg(2+). Specific enzymatic cleavages in vivo by the viral proteases yield processing intermediates and the mature proteins. Post-translationally, myristoylation is required for the formation of pentamers during virus assembly. Further assembly of 12 pentamers and a molecule of genomic RNA generates the provirion. In terms of processing, during virion maturation, immature virions are rendered infectious following cleavage of VP0 into VP4 and VP2. This maturation seems to be an autocatalytic event triggered by the presence of RNA in the capsid and it is followed by a conformational change infectious virion. Myristoylation is required during RNA encapsidation and formation of the mature virus particle. Post-translationally, VPg is uridylylated by the polymerase into VPg-pUpU. This acts as a nucleotide-peptide primer for the genomic RNA replication.

Its subcellular location is the virion. It localises to the host cytoplasm. It is found in the host cytoplasmic vesicle membrane. The protein resides in the host nucleus. The catalysed reaction is a ribonucleoside 5'-triphosphate + H2O = a ribonucleoside 5'-diphosphate + phosphate + H(+). It carries out the reaction Selective cleavage of Tyr-|-Gly bond in the picornavirus polyprotein.. The enzyme catalyses RNA(n) + a ribonucleoside 5'-triphosphate = RNA(n+1) + diphosphate. It catalyses the reaction Selective cleavage of Gln-|-Gly bond in the poliovirus polyprotein. In other picornavirus reactions Glu may be substituted for Gln, and Ser or Thr for Gly.. Its activity is regulated as follows. Replication or transcription is subject to high level of random mutations by the nucleotide analog ribavirin. Forms an icosahedral capsid of pseudo T=3 symmetry with capsid proteins VP2 and VP3. The capsid is 300 Angstroms in diameter, composed of 60 copies of each capsid protein and enclosing the viral positive strand RNA genome. Capsid protein VP1 mainly forms the vertices of the capsid. Capsid protein VP1 interacts with host cell receptor PVR to provide virion attachment to target host cells. This attachment induces virion internalization predominantly through clathrin- and caveolin-independent endocytosis in Hela cells and through caveolin-mediated endocytosis in brain microvascular endothelial cells. Tyrosine kinases are probably involved in the entry process. Virus binding to PVR induces increased junctional permeability and rearrangement of junctional proteins. Modulation of endothelial tight junctions, as well as cytolytic infection of endothelial cells themselves, may result in loss of endothelial integrity which may help the virus to reach the CNS. After binding to its receptor, the capsid undergoes conformational changes. Capsid protein VP1 N-terminus (that contains an amphipathic alpha-helix) and capsid protein VP4 are externalized. Together, they shape a pore in the host membrane through which viral genome is translocated to host cell cytoplasm. Functionally, forms an icosahedral capsid of pseudo T=3 symmetry with capsid proteins VP2 and VP3. The capsid is 300 Angstroms in diameter, composed of 60 copies of each capsid protein and enclosing the viral positive strand RNA genome. In terms of biological role, lies on the inner surface of the capsid shell. After binding to the host receptor, the capsid undergoes conformational changes. Capsid protein VP4 is released, Capsid protein VP1 N-terminus is externalized, and together, they shape a pore in the host membrane through which the viral genome is translocated into the host cell cytoplasm. Its function is as follows. Component of immature procapsids, which is cleaved into capsid proteins VP4 and VP2 after maturation. Allows the capsid to remain inactive before the maturation step. Cysteine protease that cleaves viral polyprotein and specific host proteins. It is responsible for the autocatalytic cleavage between the P1 and P2 regions, which is the first cleavage occurring in the polyprotein. Also cleaves the host translation initiation factor EIF4G1, in order to shut down the capped cellular mRNA translation. Inhibits the host nucleus-cytoplasm protein and RNA trafficking by cleaving host members of the nuclear pores including NUP98, NUP62 and NUP153. Counteracts stress granule formation probably by antagonizing its assembly or promoting its dissassembly. Cleaves and inhibits host IFIH1/MDA5, thereby inhibiting the type-I IFN production and the establishment of the antiviral state. Cleaves and inhibits host MAVS, thereby inhibiting the type-I IFN production and the establishment of the antiviral state. Functionally, plays an essential role in the virus replication cycle by acting as a viroporin. Creates a pore in the host endoplasmic reticulum and as a consequence releases Ca2+ in the cytoplasm of infected cell. In turn, high levels of cytoplasmic calcium may trigger membrane trafficking and transport of viral ER-associated proteins to viroplasms, sites of viral genome replication. In terms of biological role, induces and associates with structural rearrangements of intracellular membranes. Displays RNA-binding, nucleotide binding and NTPase activities. May play a role in virion morphogenesis and viral RNA encapsidation by interacting with the capsid protein VP3. Its function is as follows. Localizes the viral replication complex to the surface of membranous vesicles. Together with protein 3CD binds the Cis-Active RNA Element (CRE) which is involved in RNA synthesis initiation. Acts as a cofactor to stimulate the activity of 3D polymerase, maybe through a nucleid acid chaperone activity. Localizes the viral replication complex to the surface of membranous vesicles. It inhibits host cell endoplasmic reticulum-to-Golgi apparatus transport and causes the disassembly of the Golgi complex, possibly through GBF1 interaction. This would result in depletion of MHC, trail receptors and IFN receptors at the host cell surface. Plays an essential role in viral RNA replication by recruiting ACBD3 and PI4KB at the viral replication sites, thereby allowing the formation of the rearranged membranous structures where viral replication takes place. Functionally, acts as a primer for viral RNA replication and remains covalently bound to viral genomic RNA. VPg is uridylylated prior to priming replication into VPg-pUpU. The oriI viral genomic sequence may act as a template for this. The VPg-pUpU is then used as primer on the genomic RNA poly(A) by the RNA-dependent RNA polymerase to replicate the viral genome. During genome replication, the VPg-RNA linkage is removed by the host TDP2, thereby accelerating replication. During the late stage of the replication cycle, host TDP2 is excluded from sites of viral RNA synthesis and encapsidation, allowing for the generation of progeny virions. In terms of biological role, involved in the viral replication complex and viral polypeptide maturation. It exhibits protease activity with a specificity and catalytic efficiency that is different from protease 3C. Protein 3CD lacks polymerase activity. Protein 3CD binds to the 5'UTR of the viral genome. Its function is as follows. Major viral protease that mediates proteolytic processing of the polyprotein. Cleaves host EIF5B, contributing to host translation shutoff. Also cleaves host PABPC1, contributing to host translation shutoff. Cleaves host RIGI and thus contributes to the inhibition of type I interferon production. Cleaves host NLRP1, triggers host N-glycine-mediated degradation of the autoinhibitory NLRP1 N-terminal fragment. Inhibits the integrated stress response (ISR) in the infected cell by cleaving host G3BP1. Stress granule formation is thus inhibited, which allows protein synthesis and viral replication. Replicates the viral genomic RNA on the surface of intracellular membranes. May form linear arrays of subunits that propagate along a strong head-to-tail interaction called interface-I. Covalently attaches UMP to a tyrosine of VPg, which is used to prime RNA synthesis. The positive stranded RNA genome is first replicated at virus induced membranous vesicles, creating a dsRNA genomic replication form. This dsRNA is then used as template to synthesize positive stranded RNA genomes. ss(+)RNA genomes are either translated, replicated or encapsidated. This is Genome polyprotein from Poliovirus type 3 (strain 23127).